Here is a 208-residue protein sequence, read N- to C-terminus: Sexual inducer glycoprotein (208 aa).

An N-terminal signal peptide occupies residues 1 to 11 (MAVVVVNSATA). 6 N-linked (GlcNAc...) asparagine glycosylation sites follow: Asn-89, Asn-119, Asn-131, Asn-139, Asn-146, and Asn-188.

The sexual inducer is a glycoprotein synthesized and released by sexual males at about the time they release sperm packets. It is one of the most potent biological effector molecules known: it exhibits full effectiveness in converting asexually growing males and females to the sexual pathway at about 10(-7) m. This is Sexual inducer glycoprotein from Volvox carteri (Green alga).